The primary structure comprises 309 residues: Protein FdhE (309 aa).

Belongs to the FdhE family.

The protein resides in the cytoplasm. Functionally, necessary for formate dehydrogenase activity. The protein is Protein FdhE of Escherichia coli O139:H28 (strain E24377A / ETEC).